The chain runs to 1345 residues: CRISPR-associated endonuclease Cas9 (1345 aa).

The active-site For RuvC-like nuclease domain is the aspartate 10. The Mg(2+) site is built by aspartate 10, glutamate 762, and glutamate 766. The HNH Cas9-type domain maps to 770–921; sequence TNQGRRNSQQ…DKAGFIKRQL (152 aa). Histidine 840 serves as the catalytic Proton acceptor for HNH nuclease domain. Position 983 (histidine 983) interacts with Mg(2+).

This sequence belongs to the CRISPR-associated protein Cas9 family. Subtype II-A subfamily. As to quaternary structure, monomer. Binds crRNA and tracrRNA. Mg(2+) is required as a cofactor.

CRISPR (clustered regularly interspaced short palindromic repeat) is an adaptive immune system that provides protection against mobile genetic elements (viruses, transposable elements and conjugative plasmids). CRISPR clusters contain spacers, sequences complementary to antecedent mobile elements, and target invading nucleic acids. CRISPR clusters are transcribed and processed into CRISPR RNA (crRNA). In type II CRISPR systems correct processing of pre-crRNA requires a trans-encoded small RNA (tracrRNA), endogenous ribonuclease 3 (rnc) and this protein. The tracrRNA serves as a guide for ribonuclease 3-aided processing of pre-crRNA. Subsequently Cas9/crRNA/tracrRNA endonucleolytically cleaves linear or circular dsDNA target complementary to the spacer; Cas9 is inactive in the absence of the 2 guide RNAs (gRNA). Cas9 recognizes the protospacer adjacent motif (PAM) in the CRISPR repeat sequences to help distinguish self versus nonself, as targets within the bacterial CRISPR locus do not have PAMs. PAM recognition is also required for catalytic activity. Complements the gRNA coprocessing defect in a cas9 deletion in S.pyogenes strain 370 and cuts target plasmid in Cas9:gRNAs mixing experiments with S.thermophilus CRISPR3 from strain LMD-9. The chain is CRISPR-associated endonuclease Cas9 from Streptococcus mutans serotype c (strain ATCC 700610 / UA159).